The primary structure comprises 177 residues: MSRVAKNPVVLPAGVEVKLAGQQLSVKGAKGALELNVHSSVEVIQEGSELRFAARNGDQQNKAMAGTTRALVNNMVIGVSQGFERKLQLVGVGYKAQAKGQVLNLALGFSHPIDYELPAGVVAETPNQTEILIKGIDKQLVGQVAAEIRDFRRPEPYKGKGVRYADEVVRRKEAKKK.

Belongs to the universal ribosomal protein uL6 family. Part of the 50S ribosomal subunit.

Functionally, this protein binds to the 23S rRNA, and is important in its secondary structure. It is located near the subunit interface in the base of the L7/L12 stalk, and near the tRNA binding site of the peptidyltransferase center. The sequence is that of Large ribosomal subunit protein uL6 from Ectopseudomonas mendocina (strain ymp) (Pseudomonas mendocina).